A 540-amino-acid polypeptide reads, in one-letter code: Na(+)/H(+) antiporter NhaS2 (540 aa).

A run of 10 helical transmembrane segments spans residues 29-49 (ITTLVENLIILLLVATLVALV), 71-91 (GLSVGLNPELILNFFLPILIF), 117-137 (VVISAAITAVLLKIGLGLAWV), 138-158 (TAAGVSVILTITDTVSVIAAF), 207-227 (IFVAFVGGGLVGLGLGYLCVG), 256-276 (LGVSSAIAVVVAGLVIGNLAL), 296-316 (FGVNTLIFLLVGIEVYPSILL), 323-343 (LIAIVAYQIGRVFSIYPLLYL), 358-378 (VLIAGNVKGSLSMALALALPL), and 389-409 (LVFSTVMVSLIGQGLSLPWVV).

It belongs to the monovalent cation:proton antiporter 1 (CPA1) transporter (TC 2.A.36) family.

It is found in the cell membrane. Functionally, required for Na(+) uptake into the cell, especially at low external Na(+) concentrations or low Na(+)/K(+) ratios. May be part of a sodium cycle that permits re-entry of sodium into the cell. The protein is Na(+)/H(+) antiporter NhaS2 (nhaS2) of Synechocystis sp. (strain ATCC 27184 / PCC 6803 / Kazusa).